A 349-amino-acid chain; its full sequence is Protein O-mannose kinase (349 aa).

Residues 1–19 (MGQQHGARNGLTHRELPRG) lie on the Cytoplasmic side of the membrane. Residues 20 to 42 (MGLLLAMALMNVVLYVCLDHLFI) form a helical; Signal-anchor for type II membrane protein membrane-spanning segment. Over 43-349 (SPGRATEDPR…TVMSQTKEML (307 aa)) the chain is Lumenal. Asparagine 66, asparagine 164, and asparagine 219 each carry an N-linked (GlcNAc...) asparagine glycan. Positions 80–349 (VRQLKLVGEG…TVMSQTKEML (270 aa)) constitute a Protein kinase domain.

It belongs to the protein kinase superfamily. Ser/Thr protein kinase family. STKL subfamily.

Its subcellular location is the endoplasmic reticulum membrane. It carries out the reaction 3-O-[beta-D-GalNAc-(1-&gt;3)-beta-D-GlcNAc-(1-&gt;4)-alpha-D-Man]-L-Thr-[protein] + ATP = 3-O-[beta-D-GalNAc-(1-&gt;3)-beta-D-GlcNAc-(1-&gt;4)-(O-6-P-alpha-D-Man)]-Thr-[protein] + ADP + H(+). Functionally, protein O-mannose kinase that specifically mediates phosphorylation at the 6-position of an O-mannose of the trisaccharide (N-acetylgalactosamine (GalNAc)-beta-1,3-N-acetylglucosamine (GlcNAc)-beta-1,4-mannose) to generate phosphorylated O-mannosyl trisaccharide (N-acetylgalactosamine-beta-1,3-N-acetylglucosamine-beta-1,4-(phosphate-6-)mannose). Phosphorylated O-mannosyl trisaccharide is a carbohydrate structure present in alpha-dystroglycan (DAG1), which is required for binding laminin G-like domain-containing extracellular proteins with high affinity. Only shows kinase activity when the GalNAc-beta-3-GlcNAc-beta-terminus is linked to the 4-position of O-mannose, suggesting that this disaccharide serves as the substrate recognition motif. This Rattus norvegicus (Rat) protein is Protein O-mannose kinase (Pomk).